The primary structure comprises 795 residues: Phospholipase A-2-activating protein (795 aa).

7 WD repeats span residues 17-56, 63-107, 110-148, 149-188, 190-227, 229-268, and 270-307; these read HELD…RSFT, GHSN…PLYI, GHKN…MTLQ, GHTA…RTFS, HEDC…LEVY, GHTN…QTIR, and PAQS…TASA. Residue S50 is modified to Phosphoserine. Residues 366–465 form the PFU domain; the sequence is QWSVSEGRWI…KGQMLGLGNP (100 aa). K529 carries the post-translational modification N6-acetyllysine. The PUL domain occupies 533–794; sequence IYFPKKEAVT…SECCRFILNL (262 aa). 6 ARM repeats span residues 546-588, 589-620, 621-669, 670-715, 716-755, and 756-795; these read ANPT…NSSS, EKPT…LRLS, IKHP…CFVG, QAGQ…CFHK, DHNI…LISD, and DSNA…LNLL.

This sequence belongs to the WD repeat PLAP family. In terms of assembly, interacts with ubiquitin. Interacts with UBXN6, VCP and YOD1; may form a complex involved in macroautophagy.

It localises to the nucleus. It is found in the cytoplasm. The protein localises to the synapse. Its function is as follows. Plays a role in protein ubiquitination, sorting and degradation through its association with VCP. Involved in ubiquitin-mediated membrane proteins trafficking to late endosomes in an ESCRT-dependent manner, and hence plays a role in synaptic vesicle recycling. May play a role in macroautophagy, regulating for instance the clearance of damaged lysosomes. Plays a role in cerebellar Purkinje cell development. Positively regulates cytosolic and calcium-independent phospholipase A2 activities in a tumor necrosis factor alpha (TNF-alpha)- or lipopolysaccharide (LPS)-dependent manner, and hence prostaglandin E2 biosynthesis. This chain is Phospholipase A-2-activating protein (PLAA), found in Homo sapiens (Human).